A 249-amino-acid chain; its full sequence is Ubiquinone/menaquinone biosynthesis C-methyltransferase UbiE (249 aa).

S-adenosyl-L-methionine contacts are provided by residues Thr-72, Asp-93, and 121-122 (NA).

This sequence belongs to the class I-like SAM-binding methyltransferase superfamily. MenG/UbiE family.

It catalyses the reaction a 2-demethylmenaquinol + S-adenosyl-L-methionine = a menaquinol + S-adenosyl-L-homocysteine + H(+). It carries out the reaction a 2-methoxy-6-(all-trans-polyprenyl)benzene-1,4-diol + S-adenosyl-L-methionine = a 5-methoxy-2-methyl-3-(all-trans-polyprenyl)benzene-1,4-diol + S-adenosyl-L-homocysteine + H(+). The protein operates within quinol/quinone metabolism; menaquinone biosynthesis; menaquinol from 1,4-dihydroxy-2-naphthoate: step 2/2. Its pathway is cofactor biosynthesis; ubiquinone biosynthesis. Its function is as follows. Methyltransferase required for the conversion of demethylmenaquinol (DMKH2) to menaquinol (MKH2) and the conversion of 2-polyprenyl-6-methoxy-1,4-benzoquinol (DDMQH2) to 2-polyprenyl-3-methyl-6-methoxy-1,4-benzoquinol (DMQH2). In Hahella chejuensis (strain KCTC 2396), this protein is Ubiquinone/menaquinone biosynthesis C-methyltransferase UbiE.